A 232-amino-acid polypeptide reads, in one-letter code: Probable transcriptional regulatory protein Bd1964 (232 aa).

The protein belongs to the TACO1 family.

The protein resides in the cytoplasm. The protein is Probable transcriptional regulatory protein Bd1964 of Bdellovibrio bacteriovorus (strain ATCC 15356 / DSM 50701 / NCIMB 9529 / HD100).